We begin with the raw amino-acid sequence, 399 residues long: Glutathione S-transferase LANCL1 (399 aa).

Ala-2 bears the N-acetylalanine mark. At Lys-142 the chain carries N6-acetyllysine. Cys-276 provides a ligand contact to Zn(2+). Lys-317 contributes to the glutathione binding site. Zn(2+) is bound by residues Cys-322 and His-323. Arg-364–Asp-367 provides a ligand contact to glutathione.

It belongs to the LanC-like protein family. In terms of assembly, interacts with the C-terminal of STOM. Interacts with the EPS8 SH3 domain. Interaction with EPS8 is inhibited by glutathione binding. Strongly expressed in the brain, testis and skeletal muscle. Expressed in the neurons of the cerebellum, the germinal cells of the seminiferous tubules in testis, in liver hepoatocytes and in cardiac myocytes.

The protein resides in the cytoplasm. It is found in the cell membrane. It carries out the reaction RX + glutathione = an S-substituted glutathione + a halide anion + H(+). The enzyme catalyses 1-chloro-2,4-dinitrobenzene + glutathione = 2,4-dinitrophenyl-S-glutathione + chloride + H(+). Functionally, functions as a glutathione transferase. Catalyzes conjugation of the glutathione (GSH) to artificial substrates 1-chloro-2,4-dinitrobenzene (CDNB) and p-nitrophenyl acetate. Mitigates neuronal oxidative stress during normal postnatal development and in response to oxidative stresses probably through GSH antioxidant defense mechanism. May play a role in EPS8 signaling. Binds glutathione. The protein is Glutathione S-transferase LANCL1 of Rattus norvegicus (Rat).